Consider the following 333-residue polypeptide: Fructose-1,6-bisphosphatase class 1 (333 aa).

Residues E92, D113, L115, and D116 each coordinate Mg(2+). Substrate-binding positions include 116 to 119, N209, Y242, and K272; that span reads DGSS. E278 contributes to the Mg(2+) binding site.

It belongs to the FBPase class 1 family. In terms of assembly, homotetramer. Mg(2+) serves as cofactor.

It is found in the cytoplasm. It catalyses the reaction beta-D-fructose 1,6-bisphosphate + H2O = beta-D-fructose 6-phosphate + phosphate. It functions in the pathway carbohydrate biosynthesis; Calvin cycle. The sequence is that of Fructose-1,6-bisphosphatase class 1 from Chlorobaculum parvum (strain DSM 263 / NCIMB 8327) (Chlorobium vibrioforme subsp. thiosulfatophilum).